The chain runs to 198 residues: Putative nitroreductase MJ1384 (198 aa).

This sequence belongs to the nitroreductase family. FMN is required as a cofactor.

This Methanocaldococcus jannaschii (strain ATCC 43067 / DSM 2661 / JAL-1 / JCM 10045 / NBRC 100440) (Methanococcus jannaschii) protein is Putative nitroreductase MJ1384.